The following is a 217-amino-acid chain: ATP phosphoribosyltransferase (217 aa).

This sequence belongs to the ATP phosphoribosyltransferase family. Short subfamily. In terms of assembly, heteromultimer composed of HisG and HisZ subunits.

It is found in the cytoplasm. The catalysed reaction is 1-(5-phospho-beta-D-ribosyl)-ATP + diphosphate = 5-phospho-alpha-D-ribose 1-diphosphate + ATP. The protein operates within amino-acid biosynthesis; L-histidine biosynthesis; L-histidine from 5-phospho-alpha-D-ribose 1-diphosphate: step 1/9. In terms of biological role, catalyzes the condensation of ATP and 5-phosphoribose 1-diphosphate to form N'-(5'-phosphoribosyl)-ATP (PR-ATP). Has a crucial role in the pathway because the rate of histidine biosynthesis seems to be controlled primarily by regulation of HisG enzymatic activity. In Parasynechococcus marenigrum (strain WH8102), this protein is ATP phosphoribosyltransferase.